Reading from the N-terminus, the 448-residue chain is ATP-dependent protease ATPase subunit HslU (448 aa).

Residues Val-21, 63–68 (GVGKTE), Asp-260, Glu-326, and Arg-398 contribute to the ATP site.

Belongs to the ClpX chaperone family. HslU subfamily. A double ring-shaped homohexamer of HslV is capped on each side by a ring-shaped HslU homohexamer. The assembly of the HslU/HslV complex is dependent on binding of ATP.

It is found in the cytoplasm. ATPase subunit of a proteasome-like degradation complex; this subunit has chaperone activity. The binding of ATP and its subsequent hydrolysis by HslU are essential for unfolding of protein substrates subsequently hydrolyzed by HslV. HslU recognizes the N-terminal part of its protein substrates and unfolds these before they are guided to HslV for hydrolysis. This is ATP-dependent protease ATPase subunit HslU from Sulfurihydrogenibium sp. (strain YO3AOP1).